The following is a 1272-amino-acid chain: CST complex subunit CTC1 (1272 aa).

The protein belongs to the CTC1 family. Component of the CST complex, composed of CTC1, TEN1 and STN1. Interacts with POT1A.

The protein resides in the nucleus. The protein localises to the chromosome. Its subcellular location is the telomere. Component of the CST complex, a complex that binds to single-stranded DNA and is required to protect telomeres from DNA degradation. The CST complex binds single-stranded DNA with high affinity in a sequence-independent manner, while isolated subunits bind DNA with low affinity by themselves. Associates with enzymatically active telomerase. The protein is CST complex subunit CTC1 of Arabidopsis thaliana (Mouse-ear cress).